The following is an 836-amino-acid chain: Serine/threonine-protein kinase ppk5 (836 aa).

Disordered stretches follow at residues 1–29 (MVGLISTSETLPKQESKSSSAPVSNFLSP), 192–214 (INQLDETPGGTNYPMNKKKTLSS), 230–307 (CSQF…YKSI), and 328–381 (TPLD…ERQN). 3 stretches are compositionally biased toward polar residues: residues 192–205 (INQLDETPGGTNYP), 232–241 (QFASPRSSIV), and 265–288 (KPSNFNNNIQSSSYGHASQSTKLT). Basic and acidic residues predominate over residues 289–298 (SQRDNDHQKD). Basic residues predominate over residues 338-347 (SGKKFNKNSK). Residues 353–362 (STISSYSSAS) are compositionally biased toward low complexity. A Protein kinase domain is found at 518 to 814 (YEIIDTVGKG…VDSALQHEFI (297 aa)). ATP-binding positions include 524–532 (VGKGSFGQV) and Lys-547. The Proton acceptor role is filled by Asp-644. Tyr-678 carries the post-translational modification Phosphotyrosine.

The protein belongs to the protein kinase superfamily. CMGC Ser/Thr protein kinase family. MNB/DYRK subfamily.

The protein localises to the cytoplasm. The catalysed reaction is L-seryl-[protein] + ATP = O-phospho-L-seryl-[protein] + ADP + H(+). It carries out the reaction L-threonyl-[protein] + ATP = O-phospho-L-threonyl-[protein] + ADP + H(+). Its function is as follows. Has a role in meiosis. This Schizosaccharomyces pombe (strain 972 / ATCC 24843) (Fission yeast) protein is Serine/threonine-protein kinase ppk5 (ppk5).